The sequence spans 159 residues: Large ribosomal subunit protein uL15 (159 aa).

Over residues 1-18 (MKLNEIKDNEGSSKDRIR) the composition is skewed to basic and acidic residues. The disordered stretch occupies residues 1 to 39 (MKLNEIKDNEGSSKDRIRVGRGIGSGKGKTGGRGVKGQK). The segment covering 21–35 (RGIGSGKGKTGGRGV) has biased composition (gly residues).

The protein belongs to the universal ribosomal protein uL15 family. Part of the 50S ribosomal subunit.

Its function is as follows. Binds to the 23S rRNA. This is Large ribosomal subunit protein uL15 from Allorhizobium ampelinum (strain ATCC BAA-846 / DSM 112012 / S4) (Agrobacterium vitis (strain S4)).